The sequence spans 151 residues: Aspartate carbamoyltransferase regulatory chain (151 aa).

Zn(2+) contacts are provided by Cys108, Cys113, Cys138, and Cys141.

The protein belongs to the PyrI family. As to quaternary structure, contains catalytic and regulatory chains. The cofactor is Zn(2+).

Involved in allosteric regulation of aspartate carbamoyltransferase. In Pyrobaculum neutrophilum (strain DSM 2338 / JCM 9278 / NBRC 100436 / V24Sta) (Thermoproteus neutrophilus), this protein is Aspartate carbamoyltransferase regulatory chain.